The following is a 441-amino-acid chain: G-protein coupled receptor family C group 5 member C (441 aa).

The first 23 residues, 1–23 (MAIHKALVMCLGLPLFLFPGAWA), serve as a signal peptide directing secretion. Residues 24-50 (QGHVPPGCSQGLNPLYYNLCDRSGAWG) lie on the Extracellular side of the membrane. The chain crosses the membrane as a helical span at residues 51–71 (IVLEAVAGAGIVTTFVLTIIL). The Cytoplasmic portion of the chain corresponds to 72–85 (VASLPFVQDTKKRS). A helical transmembrane segment spans residues 86-106 (LLGTQVFFLLGTLGLFCLVFA). Topologically, residues 107–120 (CVVKPDFSTCASRR) are extracellular. A helical transmembrane segment spans residues 121–141 (FLFGVLFAICFSCLAAHVFAL). Residues 142-155 (NFLARKNHGPRGWV) lie on the Cytoplasmic side of the membrane. The helical transmembrane segment at 156-176 (IFTVALLLTLVEVIINTEWLI) threads the bilayer. The Extracellular segment spans residues 177–208 (ITLVRGSGEGGPQGNSSAGWAVASPCAIANMD). Asparagine 191 carries N-linked (GlcNAc...) asparagine glycosylation. Residues 209 to 229 (FVMALIYVMLLLLGAFLGAWP) form a helical membrane-spanning segment. The Cytoplasmic segment spans residues 230–241 (ALCGRYKRWRKH). The chain crosses the membrane as a helical span at residues 242–262 (GVFVLLTTATSVAIWVVWIVM). Over 263–279 (YTYGNKQHNSPTWDDPT) the chain is Extracellular. Residues 280–300 (LAIALAANAWAFVLFYVIPEV) form a helical membrane-spanning segment. Topologically, residues 301 to 441 (SQVTKSSPEQ…QVFRNPYVWD (141 aa)) are cytoplasmic. Serine 344, serine 383, serine 403, and serine 406 each carry phosphoserine. The tract at residues 412–441 (DMYSAQSHQAATPPKDGKNSQVFRNPYVWD) is disordered. Position 414 is a phosphotyrosine (tyrosine 414). A Phosphothreonine modification is found at threonine 423.

It belongs to the G-protein coupled receptor 3 family. In terms of tissue distribution, expression is highest in the periphery, particularly in the stomach, but also in the kidney, liver, pancreas, and prostate. In brain, levels of expression are generally lower than in the periphery, with the exception of cerebellum, spinal cord, and dorsal root ganglia (DRG).

It localises to the cell membrane. The protein resides in the cytoplasmic vesicle membrane. This retinoic acid-inducible G-protein coupled receptor provide evidence for a possible interaction between retinoid and G-protein signaling pathways. This chain is G-protein coupled receptor family C group 5 member C (GPRC5C), found in Homo sapiens (Human).